Consider the following 342-residue polypeptide: Protein-glutamate methylesterase/protein-glutamine glutaminase 1 (342 aa).

The Response regulatory domain maps to 3–121 (RVLVIDDSLF…NIREIGGELK (119 aa)). The residue at position 54 (D54) is a 4-aspartylphosphate. In terms of domain architecture, CheB-type methylesterase spans 141–340 (DSNARNVVLI…EKIVETIRAM (200 aa)). Active-site residues include S153, H180, and D282.

This sequence belongs to the CheB family. In terms of processing, phosphorylated by CheA. Phosphorylation of the N-terminal regulatory domain activates the methylesterase activity.

It is found in the cytoplasm. The catalysed reaction is [protein]-L-glutamate 5-O-methyl ester + H2O = L-glutamyl-[protein] + methanol + H(+). It catalyses the reaction L-glutaminyl-[protein] + H2O = L-glutamyl-[protein] + NH4(+). Involved in chemotaxis. Part of a chemotaxis signal transduction system that modulates chemotaxis in response to various stimuli. Catalyzes the demethylation of specific methylglutamate residues introduced into the chemoreceptors (methyl-accepting chemotaxis proteins or MCP) by CheR. Also mediates the irreversible deamidation of specific glutamine residues to glutamic acid. This chain is Protein-glutamate methylesterase/protein-glutamine glutaminase 1, found in Methanospirillum hungatei JF-1 (strain ATCC 27890 / DSM 864 / NBRC 100397 / JF-1).